A 282-amino-acid polypeptide reads, in one-letter code: Bifunctional protein FolD (282 aa).

Residues glycine 165–serine 167 and isoleucine 231 contribute to the NADP(+) site.

It belongs to the tetrahydrofolate dehydrogenase/cyclohydrolase family. As to quaternary structure, homodimer.

The catalysed reaction is (6R)-5,10-methylene-5,6,7,8-tetrahydrofolate + NADP(+) = (6R)-5,10-methenyltetrahydrofolate + NADPH. It carries out the reaction (6R)-5,10-methenyltetrahydrofolate + H2O = (6R)-10-formyltetrahydrofolate + H(+). Its pathway is one-carbon metabolism; tetrahydrofolate interconversion. Functionally, catalyzes the oxidation of 5,10-methylenetetrahydrofolate to 5,10-methenyltetrahydrofolate and then the hydrolysis of 5,10-methenyltetrahydrofolate to 10-formyltetrahydrofolate. In Francisella philomiragia subsp. philomiragia (strain ATCC 25017 / CCUG 19701 / FSC 153 / O#319-036), this protein is Bifunctional protein FolD.